The chain runs to 330 residues: Phosphate acyltransferase (330 aa).

The protein belongs to the PlsX family. Homodimer. Probably interacts with PlsY.

The protein resides in the cytoplasm. It catalyses the reaction a fatty acyl-[ACP] + phosphate = an acyl phosphate + holo-[ACP]. The protein operates within lipid metabolism; phospholipid metabolism. Catalyzes the reversible formation of acyl-phosphate (acyl-PO(4)) from acyl-[acyl-carrier-protein] (acyl-ACP). This enzyme utilizes acyl-ACP as fatty acyl donor, but not acyl-CoA. The protein is Phosphate acyltransferase of Bacillus cytotoxicus (strain DSM 22905 / CIP 110041 / 391-98 / NVH 391-98).